The sequence spans 509 residues: 2-isopropylmalate synthase (509 aa).

One can recognise a Pyruvate carboxyltransferase domain in the interval 5–267 (IQIFDTTLRD…QTALNLEETK (263 aa)). Asp14, His202, His204, and Asn238 together coordinate Mn(2+). The regulatory domain stretch occupies residues 391 to 509 (KLETLQLQYV…AAENVEKVGN (119 aa)).

The protein belongs to the alpha-IPM synthase/homocitrate synthase family. LeuA type 1 subfamily. Homodimer. It depends on Mn(2+) as a cofactor.

Its subcellular location is the cytoplasm. It carries out the reaction 3-methyl-2-oxobutanoate + acetyl-CoA + H2O = (2S)-2-isopropylmalate + CoA + H(+). It functions in the pathway amino-acid biosynthesis; L-leucine biosynthesis; L-leucine from 3-methyl-2-oxobutanoate: step 1/4. Its function is as follows. Catalyzes the condensation of the acetyl group of acetyl-CoA with 3-methyl-2-oxobutanoate (2-ketoisovalerate) to form 3-carboxy-3-hydroxy-4-methylpentanoate (2-isopropylmalate). The sequence is that of 2-isopropylmalate synthase from Staphylococcus aureus (strain bovine RF122 / ET3-1).